Consider the following 427-residue polypeptide: BSD domain-containing protein 1 (427 aa).

2 positions are modified to phosphoserine: Ser-92 and Ser-166. In terms of domain architecture, BSD spans 146 to 198; that stretch reads WLSEFCLEEKKGEISELLVGSPSIRALYTKMVPAAVSHSEFWHRYFYKVHQLE. Positions 208 to 397 are disordered; the sequence is KQRADQSISE…ISEDWEKDFD (190 aa). The segment covering 219 to 229 has biased composition (acidic residues); that stretch reads PGWEEEEEELE. Basic and acidic residues predominate over residues 236-245; it reads KEAKIPKETK. Positions 268-279 are enriched in low complexity; it reads PAEATPSESSES. Residues 324 to 333 show a composition bias toward pro residues; that stretch reads GPPPPPPSKP. The span at 347 to 364 shows a compositional bias: basic and acidic residues; the sequence is PPARVETLREEVPTDLRV. Thr-353 carries the post-translational modification Phosphothreonine. Polar residues predominate over residues 368 to 387; sequence NSDSGKSTPSNNGKKGSSTD. Residues Ser-384 and Ser-385 each carry the phosphoserine modification. Acidic residues predominate over residues 388–397; that stretch reads ISEDWEKDFD. Ser-415 carries the post-translational modification Phosphoserine.

The protein is BSD domain-containing protein 1 (Bsdc1) of Mus musculus (Mouse).